We begin with the raw amino-acid sequence, 638 residues long: Probable glycerol-3-phosphate dehydrogenase, mitochondrial (638 aa).

Residue 100 to 128 participates in FAD binding; it reads DLIVIGGGATGTGVALDAQSRGMKVALFE.

This sequence belongs to the FAD-dependent glycerol-3-phosphate dehydrogenase family. Requires FAD as cofactor.

It localises to the mitochondrion. It carries out the reaction a quinone + sn-glycerol 3-phosphate = dihydroxyacetone phosphate + a quinol. It participates in polyol metabolism; glycerol degradation via glycerol kinase pathway; glycerone phosphate from sn-glycerol 3-phosphate (anaerobic route): step 1/1. In Dictyostelium discoideum (Social amoeba), this protein is Probable glycerol-3-phosphate dehydrogenase, mitochondrial.